A 277-amino-acid polypeptide reads, in one-letter code: NADPH-dependent 7-cyano-7-deazaguanine reductase (277 aa).

83-85 (IES) is a binding site for substrate. Position 85-86 (85-86 (SK)) interacts with NADPH. Cysteine 184 (thioimide intermediate) is an active-site residue. Aspartate 191 serves as the catalytic Proton donor. 223–224 (HE) provides a ligand contact to substrate. Position 252 to 253 (252 to 253 (RG)) interacts with NADPH.

Belongs to the GTP cyclohydrolase I family. QueF type 2 subfamily. As to quaternary structure, homodimer.

The protein resides in the cytoplasm. It carries out the reaction 7-aminomethyl-7-carbaguanine + 2 NADP(+) = 7-cyano-7-deazaguanine + 2 NADPH + 3 H(+). The protein operates within tRNA modification; tRNA-queuosine biosynthesis. Catalyzes the NADPH-dependent reduction of 7-cyano-7-deazaguanine (preQ0) to 7-aminomethyl-7-deazaguanine (preQ1). In Cupriavidus necator (strain ATCC 17699 / DSM 428 / KCTC 22496 / NCIMB 10442 / H16 / Stanier 337) (Ralstonia eutropha), this protein is NADPH-dependent 7-cyano-7-deazaguanine reductase.